The primary structure comprises 39 residues: Photosystem II reaction center protein J (39 aa).

Residues Ile7–Phe27 traverse the membrane as a helical segment.

This sequence belongs to the PsbJ family. PSII is composed of 1 copy each of membrane proteins PsbA, PsbB, PsbC, PsbD, PsbE, PsbF, PsbH, PsbI, PsbJ, PsbK, PsbL, PsbM, PsbT, PsbX, PsbY, PsbZ, Psb30/Ycf12, peripheral proteins PsbO, CyanoQ (PsbQ), PsbU, PsbV and a large number of cofactors. It forms dimeric complexes.

The protein resides in the cellular thylakoid membrane. In terms of biological role, one of the components of the core complex of photosystem II (PSII). PSII is a light-driven water:plastoquinone oxidoreductase that uses light energy to abstract electrons from H(2)O, generating O(2) and a proton gradient subsequently used for ATP formation. It consists of a core antenna complex that captures photons, and an electron transfer chain that converts photonic excitation into a charge separation. The sequence is that of Photosystem II reaction center protein J from Cyanothece sp. (strain PCC 7425 / ATCC 29141).